Reading from the N-terminus, the 81-residue chain is MSHAVKIYDTCIGCTQCVRACPLDVLEMVPWDGHKSGQIAASPRTEDCVGCKRCETACPTDFLSIRVYLGDETTRSMGLAY.

2 4Fe-4S ferredoxin-type domains span residues Ser2–Trp31 and Ile39–Tyr68. Residues Cys11, Cys14, Cys17, Cys21, Cys48, Cys51, Cys54, and Cys58 each contribute to the [4Fe-4S] cluster site.

The cyanobacterial PSI reaction center is composed of one copy each of PsaA,B,C,D,E,F,I,J,K,L,M and X, and forms trimeric complexes. The cofactor is [4Fe-4S] cluster.

It localises to the cellular thylakoid membrane. It catalyses the reaction reduced [plastocyanin] + hnu + oxidized [2Fe-2S]-[ferredoxin] = oxidized [plastocyanin] + reduced [2Fe-2S]-[ferredoxin]. Its function is as follows. Apoprotein for the two 4Fe-4S centers FA and FB of photosystem I (PSI); essential for photochemical activity. FB is the terminal electron acceptor of PSI, donating electrons to ferredoxin. The C-terminus interacts with PsaA/B/D and helps assemble the protein into the PSI complex. Required for binding of PsaD and PsaE to PSI. PSI is a plastocyanin/cytochrome c6-ferredoxin oxidoreductase, converting photonic excitation into a charge separation, which transfers an electron from the donor P700 chlorophyll pair to the spectroscopically characterized acceptors A0, A1, FX, FA and FB in turn. The polypeptide is Photosystem I iron-sulfur center (Prochlorococcus marinus (strain MIT 9303)).